Here is a 147-residue protein sequence, read N- to C-terminus: Transmembrane protein 210 (147 aa).

An N-terminal signal peptide occupies residues 1–31 (MAPGPWPVSCLRGGPLGLTYLSLLLIPAAAG). Residues 32–47 (TYCECSLGLSREALIA) are Extracellular-facing. The helical transmembrane segment at 48-68 (LLVVLAGISASCFCALVIVAI) threads the bilayer. Topologically, residues 69-147 (GVLRAKGETC…PPPPPPLPPE (79 aa)) are cytoplasmic. The interval 128-147 (AIPMEASSEEPPPPPPLPPE) is disordered. Positions 137-147 (EPPPPPPLPPE) are enriched in pro residues.

It localises to the membrane. Its subcellular location is the cytoplasmic vesicle. The protein resides in the secretory vesicle. It is found in the acrosome. This is Transmembrane protein 210 (TMEM210) from Homo sapiens (Human).